The following is a 507-amino-acid chain: Arylsulfatase A (507 aa).

The signal sequence occupies residues 1-18 (MGAPRSLLLALAAGLAVA). Positions 29, 30, and 69 each coordinate Ca(2+). Cysteine 69 (nucleophile) is an active-site residue. Position 69 is a 3-oxoalanine (Cys) (cysteine 69). Lysine 123 is a substrate binding site. Histidine 125 is a catalytic residue. Serine 150 contributes to the substrate binding site. Intrachain disulfides connect cysteine 156–cysteine 172 and cysteine 161–cysteine 168. Asparagine 158 carries an N-linked (GlcNAc...) asparagine glycan. Residue asparagine 184 is glycosylated (N-linked (GlcNAc...) asparagine). Histidine 229 is a binding site for substrate. Aspartate 281 and asparagine 282 together coordinate Ca(2+). Intrachain disulfides connect cysteine 300-cysteine 414, cysteine 488-cysteine 500, cysteine 489-cysteine 502, and cysteine 493-cysteine 499. Position 302 (lysine 302) interacts with substrate. N-linked (GlcNAc...) asparagine glycosylation occurs at asparagine 350.

The protein belongs to the sulfatase family. As to quaternary structure, homodimer at neutral pH and homooctamer at acidic pH. Exists both as a single chain of 58 kDa (component A) or as a chain of 50 kDa (component B) linked by disulfide bond(s) to a 7 kDa chain (component C). Interacts with SUMF1. It depends on Ca(2+) as a cofactor. The conversion to 3-oxoalanine (also known as C-formylglycine, FGly), of a serine or cysteine residue in prokaryotes and of a cysteine residue in eukaryotes, is critical for catalytic activity. This post-translational modification is severely defective in multiple sulfatase deficiency (MSD).

It localises to the endoplasmic reticulum. Its subcellular location is the lysosome. The catalysed reaction is an N-acyl-1-beta-D-(3-O-sulfo)-galactosyl-sphing-4-enine + H2O = a beta-D-galactosyl-(1&lt;-&gt;1')-N-acylsphing-4-enine + sulfate + H(+). With respect to regulation, inhibited by phosphate. The phosphate forms a covalent bond with the active site 3-oxoalanine. Functionally, hydrolyzes cerebroside sulfate. This chain is Arylsulfatase A (ARSA), found in Homo sapiens (Human).